A 546-amino-acid chain; its full sequence is Probable sucrose-6-phosphate hydrolase (546 aa).

Substrate is bound by residues 105-108 (LLND), glutamine 124, 167-168 (FS), 228-229 (RD), and glutamate 283. The active site involves aspartate 108.

It belongs to the glycosyl hydrolase 32 family.

The protein localises to the cytoplasm. The enzyme catalyses Hydrolysis of terminal non-reducing beta-D-fructofuranoside residues in beta-D-fructofuranosides.. The protein operates within glycan biosynthesis; sucrose metabolism. In terms of biological role, enables the bacterium to metabolize sucrose as a sole carbon source. This Vibrio cholerae protein is Probable sucrose-6-phosphate hydrolase.